A 334-amino-acid polypeptide reads, in one-letter code: Acryloyl-coenzyme A reductase (334 aa).

Zn(2+) is bound at residue Cys38. Tyr39 is an NADP(+) binding site. Residues His60, Asp90, Cys93, Cys96, Cys104, and Cys146 each contribute to the Zn(2+) site. NADP(+) is bound by residues Ser173–Val176 and Thr195–Ser197.

It belongs to the zinc-containing alcohol dehydrogenase family. As to quaternary structure, monomer. Requires Zn(2+) as cofactor.

It carries out the reaction propanoyl-CoA + NADP(+) = acryloyl-CoA + NADPH + H(+). Its function is as follows. Plays a role in autotrophic carbon fixation via the 3-hydroxypropionate/4-hydroxybutyrate cycle. Catalyzes the acryloyl-CoA dependent NADPH oxidation and formation of propionyl-CoA. Inactive towards 3-hydroxypropionyl-CoA, NADH and crotonyl-CoA. This Sulfurisphaera tokodaii (strain DSM 16993 / JCM 10545 / NBRC 100140 / 7) (Sulfolobus tokodaii) protein is Acryloyl-coenzyme A reductase.